A 410-amino-acid polypeptide reads, in one-letter code: Peptidase T (410 aa).

Histidine 79 is a binding site for Zn(2+). Aspartate 81 is an active-site residue. Aspartate 142 contacts Zn(2+). The active-site Proton acceptor is the glutamate 176. Zn(2+) contacts are provided by glutamate 177, aspartate 199, and histidine 381.

Belongs to the peptidase M20B family. Zn(2+) serves as cofactor.

The protein resides in the cytoplasm. It carries out the reaction Release of the N-terminal residue from a tripeptide.. In terms of biological role, cleaves the N-terminal amino acid of tripeptides. The chain is Peptidase T (pepT) from Bacillus subtilis (strain 168).